The chain runs to 212 residues: Pyridoxine/pyridoxamine 5'-phosphate oxidase (212 aa).

Residues arginine 8–tyrosine 11 and lysine 66 each bind substrate. FMN-binding positions include arginine 61–lysine 66, phenylalanine 76–threonine 77, lysine 83, and glutamine 105. Residues tyrosine 123, arginine 127, and serine 131 each coordinate substrate. Residues glutamine 140–serine 141 and tryptophan 185 each bind FMN. Residue arginine 191–histidine 193 participates in substrate binding. Arginine 195 is an FMN binding site.

This sequence belongs to the pyridoxamine 5'-phosphate oxidase family. As to quaternary structure, homodimer. Requires FMN as cofactor.

The catalysed reaction is pyridoxamine 5'-phosphate + O2 + H2O = pyridoxal 5'-phosphate + H2O2 + NH4(+). It catalyses the reaction pyridoxine 5'-phosphate + O2 = pyridoxal 5'-phosphate + H2O2. It participates in cofactor metabolism; pyridoxal 5'-phosphate salvage; pyridoxal 5'-phosphate from pyridoxamine 5'-phosphate: step 1/1. It functions in the pathway cofactor metabolism; pyridoxal 5'-phosphate salvage; pyridoxal 5'-phosphate from pyridoxine 5'-phosphate: step 1/1. In terms of biological role, catalyzes the oxidation of either pyridoxine 5'-phosphate (PNP) or pyridoxamine 5'-phosphate (PMP) into pyridoxal 5'-phosphate (PLP). The protein is Pyridoxine/pyridoxamine 5'-phosphate oxidase of Leptospira biflexa serovar Patoc (strain Patoc 1 / Ames).